The sequence spans 145 residues: UPF0201 protein M164_1168 (145 aa).

This sequence belongs to the UPF0201 family.

This is UPF0201 protein M164_1168 from Saccharolobus islandicus (strain M.16.4 / Kamchatka #3) (Sulfolobus islandicus).